Here is a 471-residue protein sequence, read N- to C-terminus: Putative multidrug resistance protein MdtD (471 aa).

At Met1–Gln11 the chain is on the periplasmic side. The helical transmembrane segment at Leu12–Ala32 threads the bilayer. Residues Leu33 to His48 lie on the Cytoplasmic side of the membrane. The helical transmembrane segment at Met49 to Ala69 threads the bilayer. The Periplasmic segment spans residues Asp70–Asn76. The helical transmembrane segment at Ile77–Thr97 threads the bilayer. Topologically, residues Leu98–Leu101 are cytoplasmic. The helical transmembrane segment at Leu102 to Met124 threads the bilayer. The Periplasmic segment spans residues Lys125–Thr137. The chain crosses the membrane as a helical span at residues Phe138–Val158. At Glu159–His164 the chain is on the cytoplasmic side. Residues Trp165 to Met185 form a helical membrane-spanning segment. Topologically, residues Pro186–Asp196 are periplasmic. The helical transmembrane segment at Leu197–Ser217 threads the bilayer. Over Lys218–Pro224 the chain is Cytoplasmic. A helical transmembrane segment spans residues Leu225 to Ala245. The Periplasmic segment spans residues Arg246–Thr262. The helical transmembrane segment at Phe263–Met283 threads the bilayer. At Thr284–Pro285 the chain is on the cytoplasmic side. The helical transmembrane segment at Val286 to Met306 threads the bilayer. Residues Val307 to Thr341 are Periplasmic-facing. Residues Leu342–Leu362 traverse the membrane as a helical segment. Residues Gln363–Ser395 lie on the Cytoplasmic side of the membrane. The helical transmembrane segment at Met396–Phe416 threads the bilayer. Residues Gly417 to Thr430 lie on the Periplasmic side of the membrane. Residues Val431 to Ala451 form a helical membrane-spanning segment. The Cytoplasmic segment spans residues Arg452–Gln471.

This sequence belongs to the major facilitator superfamily. TCR/Tet family.

The protein resides in the cell inner membrane. The chain is Putative multidrug resistance protein MdtD from Escherichia coli O127:H6 (strain E2348/69 / EPEC).